A 496-amino-acid chain; its full sequence is Cytochrome P450 monooxygenase ausR (496 aa).

Residues 12-32 traverse the membrane as a helical segment; it reads IGLYILWTIPVLFVIFKLLAP. C435 contacts heme.

It belongs to the cytochrome P450 family. Requires heme as cofactor.

It localises to the membrane. It functions in the pathway secondary metabolite biosynthesis; terpenoid biosynthesis. Functionally, cytochrome P450 monooxygenase; part of the gene cluster B that mediates the biosynthesis of the fungal meroterpenoid acetoxydehydroaustin. The first step of the pathway is the synthesis of 3,5-dimethylorsellinic acid by the polyketide synthase ausA. 3,5-dimethylorsellinic acid is then prenylated by the polyprenyl transferase ausN. Further epoxidation by the FAD-dependent monooxygenase ausM and cyclization by the probable terpene cyclase ausL lead to the formation of protoaustinoid A. Protoaustinoid A is then oxidized to spiro-lactone preaustinoid A3 by the combined action of the FAD-binding monooxygenases ausB and ausC, and the dioxygenase ausE. Acid-catalyzed keto-rearrangement and ring contraction of the tetraketide portion of preaustinoid A3 by ausJ lead to the formation of preaustinoid A4. The aldo-keto reductase ausK, with the help of ausH, is involved in the next step by transforming preaustinoid A4 into isoaustinone which is in turn hydroxylated by the P450 monooxygenase ausI to form austinolide. The cytochrome P450 monooxygenase ausG then modifies austinolide to austinol. Austinol is further acetylated to austin by the O-acetyltransferase ausP, which spontaneously changes to dehydroaustin. The cytochrome P450 monooxygenase then converts dehydroaustin is into 7-dehydrodehydroaustin. The hydroxylation catalyzed by ausR permits the second O-acetyltransferase ausQ to add an additional acetyl group to the molecule, leading to the formation of acetoxydehydroaustin. Due to genetic rearrangements of the clusters and the subsequent loss of some enzymes, the end product of the Penicillium brasilianum austinoid biosynthesis clusters is acetoxydehydroaustin. The sequence is that of Cytochrome P450 monooxygenase ausR from Penicillium brasilianum.